Reading from the N-terminus, the 260-residue chain is Phosphatidylglycerol--prolipoprotein diacylglyceryl transferase (260 aa).

4 helical membrane passes run 17-37 (VVKWYGIMMALGVIALVSWIF), 52-72 (LTAAIIAIPSGIIFSKLLHVI), 85-105 (ILSGEGLTIFGAIIGATIGLW), and 113-133 (FNLGYLLDVAVPGILLGQAIG). R134 serves as a coordination point for a 1,2-diacyl-sn-glycero-3-phospho-(1'-sn-glycerol). 3 consecutive transmembrane segments (helical) span residues 170–190 (VPTQAYEIIFLLCLFAFSLFI), 198–218 (GQLFLLYISLYAAWRVAIGFV), and 227–247 (GLEQAQVVGLILIALAVPFFI).

It belongs to the Lgt family.

The protein localises to the cell membrane. The enzyme catalyses L-cysteinyl-[prolipoprotein] + a 1,2-diacyl-sn-glycero-3-phospho-(1'-sn-glycerol) = an S-1,2-diacyl-sn-glyceryl-L-cysteinyl-[prolipoprotein] + sn-glycerol 1-phosphate + H(+). The protein operates within protein modification; lipoprotein biosynthesis (diacylglyceryl transfer). In terms of biological role, catalyzes the transfer of the diacylglyceryl group from phosphatidylglycerol to the sulfhydryl group of the N-terminal cysteine of a prolipoprotein, the first step in the formation of mature lipoproteins. This chain is Phosphatidylglycerol--prolipoprotein diacylglyceryl transferase, found in Dehalococcoides mccartyi (strain ATCC BAA-2266 / KCTC 15142 / 195) (Dehalococcoides ethenogenes (strain 195)).